Here is a 334-residue protein sequence, read N- to C-terminus: Beta-hexosaminidase (334 aa).

Residues D60, R68, R133, and 163–164 (KH) each bind substrate. The active-site Proton donor/acceptor is the H176. D247 (nucleophile) is an active-site residue.

Belongs to the glycosyl hydrolase 3 family. NagZ subfamily.

Its subcellular location is the cytoplasm. It carries out the reaction Hydrolysis of terminal non-reducing N-acetyl-D-hexosamine residues in N-acetyl-beta-D-hexosaminides.. It participates in cell wall biogenesis; peptidoglycan recycling. Its function is as follows. Plays a role in peptidoglycan recycling by cleaving the terminal beta-1,4-linked N-acetylglucosamine (GlcNAc) from peptide-linked peptidoglycan fragments, giving rise to free GlcNAc, anhydro-N-acetylmuramic acid and anhydro-N-acetylmuramic acid-linked peptides. This Xanthomonas euvesicatoria pv. vesicatoria (strain 85-10) (Xanthomonas campestris pv. vesicatoria) protein is Beta-hexosaminidase.